A 760-amino-acid polypeptide reads, in one-letter code: Transferrin receptor protein 1 (760 aa).

The Cytoplasmic portion of the chain corresponds to 1–67; that stretch reads MMDQARSAFS…KPKRCSGSIC (67 aa). Positions 1-67 are mediates interaction with SH3BP4; sequence MMDQARSAFS…KPKRCSGSIC (67 aa). 2 positions are modified to phosphoserine: serine 10 and serine 19. Residue tyrosine 20 is modified to Phosphotyrosine. An Endocytosis signal motif is present at residues 20–23; it reads YTRF. Position 21 is a phosphothreonine (threonine 21). The residue at position 24 (serine 24) is a Phosphoserine. The Stop-transfer sequence motif lies at 58 to 61; that stretch reads KPKR. 2 S-palmitoyl cysteine lipidation sites follow: cysteine 62 and cysteine 67. The helical; Signal-anchor for type II membrane protein transmembrane segment at 68-88 threads the bilayer; that stretch reads YGTIAVIVFFLIGFMIGYLGY. At 89–760 the chain is on the extracellular side; sequence CKGVEPKTEC…GDVWDIDNEF (672 aa). O-linked (GalNAc...) threonine glycosylation is present at threonine 104. Positions 223–313 constitute a PA domain; the sequence is SKAATVTGKL…GTGDPYTPGF (91 aa). N-linked (GlcNAc...) asparagine glycans are attached at residues asparagine 251 and asparagine 317. The tract at residues 569-760 is ligand-binding; sequence TMDTYKELIE…GDVWDIDNEF (192 aa). Positions 646–648 match the Cell attachment site; required for binding to transferrin motif; it reads RGD. A glycan (N-linked (GlcNAc...) asparagine) is linked at asparagine 727.

Belongs to the peptidase M28 family. M28B subfamily. As to quaternary structure, homodimer; disulfide-linked. Binds one transferrin or HFE molecule per subunit. Binds the HLA class II histocompatibility antigen, DR1. Interacts with SH3BP3. Interacts with STEAP3; facilitates TFRC endocytosis in erythroid precursor cells. Interacts with GRM2. (Microbial infection) Interacts with Guanarito, Junin and Machupo arenavirus glycoprotein complex. In terms of assembly, (Microbial infection) Interacts with rabies virus protein G. As to quaternary structure, (Microbial infection) Interacts with SARS-CoV-2 spike protein S. Post-translationally, stearoylated by ZDHHC6 which inhibits TFRC-mediated activation of the JNK pathway and promotes mitochondrial fragmentation. Stearoylation does not affect iron uptake. In terms of processing, N- and O-glycosylated, phosphorylated and palmitoylated. The serum form is only glycosylated. Proteolytically cleaved on Arg-100 to produce the soluble serum form (sTfR). Post-translationally, palmitoylated on both Cys-62 and Cys-67. Cys-62 seems to be the major site of palmitoylation.

The protein localises to the cell membrane. Its subcellular location is the melanosome. It localises to the secreted. Its function is as follows. Cellular uptake of iron occurs via receptor-mediated endocytosis of ligand-occupied transferrin receptor into specialized endosomes. Endosomal acidification leads to iron release. The apotransferrin-receptor complex is then recycled to the cell surface with a return to neutral pH and the concomitant loss of affinity of apotransferrin for its receptor. Transferrin receptor is necessary for development of erythrocytes and the nervous system. A second ligand, the hereditary hemochromatosis protein HFE, competes for binding with transferrin for an overlapping C-terminal binding site. Positively regulates T and B cell proliferation through iron uptake. Acts as a lipid sensor that regulates mitochondrial fusion by regulating activation of the JNK pathway. When dietary levels of stearate (C18:0) are low, promotes activation of the JNK pathway, resulting in HUWE1-mediated ubiquitination and subsequent degradation of the mitofusin MFN2 and inhibition of mitochondrial fusion. When dietary levels of stearate (C18:0) are high, TFRC stearoylation inhibits activation of the JNK pathway and thus degradation of the mitofusin MFN2. Mediates uptake of NICOL1 into fibroblasts where it may regulate extracellular matrix production. Functionally, (Microbial infection) Acts as a receptor for new-world arenaviruses: Guanarito, Junin and Machupo virus. In terms of biological role, (Microbial infection) Acts as a host entry factor for rabies virus that hijacks the endocytosis of TFRC to enter cells. (Microbial infection) Acts as a host entry factor for SARS-CoV, MERS-CoV and SARS-CoV-2 viruses that hijack the endocytosis of TFRC to enter cells. This chain is Transferrin receptor protein 1 (TFRC), found in Homo sapiens (Human).